Reading from the N-terminus, the 404-residue chain is Argininosuccinate synthase (404 aa).

ATP is bound by residues 10 to 18 (AYSGGLDTS) and Ala37. Positions 88 and 93 each coordinate L-citrulline. Gly118 is an ATP binding site. Residues Thr120, Asn124, and Asp125 each contribute to the L-aspartate site. Asn124 is a binding site for L-citrulline. Residues Arg128, Ser178, Ser187, Glu263, and Tyr275 each coordinate L-citrulline.

Belongs to the argininosuccinate synthase family. Type 1 subfamily. In terms of assembly, homotetramer.

It localises to the cytoplasm. The enzyme catalyses L-citrulline + L-aspartate + ATP = 2-(N(omega)-L-arginino)succinate + AMP + diphosphate + H(+). It participates in amino-acid biosynthesis; L-arginine biosynthesis; L-arginine from L-ornithine and carbamoyl phosphate: step 2/3. The chain is Argininosuccinate synthase from Hahella chejuensis (strain KCTC 2396).